Reading from the N-terminus, the 357-residue chain is Thiamine thiazole synthase 3, chloroplastic (357 aa).

The N-terminal 51 residues, methionine 1 to serine 51, are a transit peptide targeting the chloroplast. Residues alanine 103, glutamate 123 to glutamine 124, glycine 131, and alanine 196 each bind substrate. Cysteine 225 carries the 2,3-didehydroalanine (Cys) modification. Residues aspartate 227, histidine 242, methionine 294, and arginine 304–glycine 306 each bind substrate.

It belongs to the THI4 family. As to quaternary structure, homooctamer. Fe cation is required as a cofactor. During the catalytic reaction, a sulfide is transferred from Cys-225 to a reaction intermediate, generating a dehydroalanine residue.

It localises to the plastid. The protein resides in the chloroplast. The catalysed reaction is [ADP-thiazole synthase]-L-cysteine + glycine + NAD(+) = [ADP-thiazole synthase]-dehydroalanine + ADP-5-ethyl-4-methylthiazole-2-carboxylate + nicotinamide + 3 H2O + 2 H(+). Functionally, involved in biosynthesis of the thiamine precursor thiazole. Catalyzes the conversion of NAD and glycine to adenosine diphosphate 5-(2-hydroxyethyl)-4-methylthiazole-2-carboxylic acid (ADT), an adenylated thiazole intermediate. The reaction includes an iron-dependent sulfide transfer from a conserved cysteine residue of the protein to a thiazole intermediate. The enzyme can only undergo a single turnover, which suggests it is a suicide enzyme. May have additional roles in adaptation to various stress conditions and in DNA damage tolerance. The polypeptide is Thiamine thiazole synthase 3, chloroplastic (Physcomitrium patens (Spreading-leaved earth moss)).